The chain runs to 676 residues: Protein timeless (676 aa).

Positions 77-108 (VNTLQKLLNLWFEASLSESSEDNESNTSPPKK) are necessary for normal circadian rhythm. 2 disordered regions span residues 94-145 (ESSE…CDER) and 346-398 (PESI…LVKR). Composition is skewed to low complexity over residues 101 to 129 (SNTS…SDNG) and 360 to 369 (QGKPQHQKPP). The short motif at 388 to 398 (KELRRKKLVKR) is the Nuclear localization signal element.

It belongs to the timeless family. As to quaternary structure, forms a heterodimer with period (PER); the complex then translocates into the nucleus. Post-translationally, phosphorylated with a circadian rhythmicity.

It is found in the nucleus. Its subcellular location is the cytoplasm. It localises to the perinuclear region. In terms of biological role, required for the production of circadian rhythms. The biological cycle depends on the rhythmic formation and nuclear localization of the TIM-PER complex. Light induces the degradation of TIM, which promotes elimination of PER. Nuclear activity of the heterodimer coordinatively regulates PER and TIM transcription through a negative feedback loop. Behaves as a negative element in circadian transcriptional loop. Does not appear to bind DNA, suggesting indirect transcriptional inhibition. The chain is Protein timeless (tim) from Drosophila hydei (Fruit fly).